Here is a 197-residue protein sequence, read N- to C-terminus: Ribonuclease HII (197 aa).

The RNase H type-2 domain maps to 14–197 (EKIVGIDEAG…RSFNLGVNDD (184 aa)). A divalent metal cation is bound by residues aspartate 20, glutamate 21, and aspartate 112.

This sequence belongs to the RNase HII family. Mn(2+) serves as cofactor. The cofactor is Mg(2+).

It localises to the cytoplasm. The enzyme catalyses Endonucleolytic cleavage to 5'-phosphomonoester.. Endonuclease that specifically degrades the RNA of RNA-DNA hybrids. This Sulfurihydrogenibium sp. (strain YO3AOP1) protein is Ribonuclease HII.